The sequence spans 465 residues: ATP-dependent RNA helicase ddx19 (465 aa).

Positions 1–20 (MSEKETNTTSTENKEKEKQE) are enriched in basic and acidic residues. The segment at 1-45 (MSEKETNTTSTENKEKEKQEQTNTNSTTESTNNQVDEEYERPGRS) is disordered. Positions 21 to 34 (QTNTNSTTESTNNQ) are enriched in low complexity. Residues 70-98 (KTFEELGLKPELLKGVYAMGYNKPSKIQE) carry the Q motif motif. Positions 102-268 (PIIIQSPNNL…KKIVQDPYTS (167 aa)) constitute a Helicase ATP-binding domain. An ATP-binding site is contributed by 115–122 (SQSGTGKT). The DEAD box motif lies at 215–218 (DEAD). Residues 297–449 (ILSDIYGFIS…ELKSSEIESL (153 aa)) enclose the Helicase C-terminal domain.

This sequence belongs to the DEAD box helicase family. DDX19/DBP5 subfamily.

The enzyme catalyses ATP + H2O = ADP + phosphate + H(+). In terms of biological role, ATP-binding RNA helicase required for normal differentiation and development. The polypeptide is ATP-dependent RNA helicase ddx19 (helC) (Dictyostelium discoideum (Social amoeba)).